The sequence spans 206 residues: Small ribosomal subunit protein uS4 (206 aa).

One can recognise an S4 RNA-binding domain in the interval 96 to 156 (TRLDNVVYRM…EKSRTQARIK (61 aa)).

It belongs to the universal ribosomal protein uS4 family. Part of the 30S ribosomal subunit. Contacts protein S5. The interaction surface between S4 and S5 is involved in control of translational fidelity.

Functionally, one of the primary rRNA binding proteins, it binds directly to 16S rRNA where it nucleates assembly of the body of the 30S subunit. With S5 and S12 plays an important role in translational accuracy. The chain is Small ribosomal subunit protein uS4 from Shewanella denitrificans (strain OS217 / ATCC BAA-1090 / DSM 15013).